The sequence spans 569 residues: Endonuclease/exonuclease/phosphatase family domain-containing protein 1 (569 aa).

Residues 1–20 (MGSTLGCHRSIPRDPSDLSH) form a disordered region. A lipid anchor (N-myristoyl glycine) is attached at G2. Residues 11-20 (IPRDPSDLSH) show a composition bias toward basic and acidic residues. Residues S16, S21, and S25 each carry the phosphoserine modification. The HhH domain occupies 38-67 (ERLNINTATEEELMTLPGVTRAVARSIVEY). 4 positions are modified to phosphoserine: S106, S110, S160, and S173. The interval 200–225 (SRPPSTHTNGGLTFTAKPHPSPTSLS) is disordered. Positions 202-211 (PPSTHTNGGL) are enriched in polar residues. Residue T265 is modified to Phosphothreonine. S428 carries the post-translational modification Phosphoserine. Residues 545–569 (SKKDAPRNGSGVALERSEANIKHER) are disordered. Residues 559-569 (ERSEANIKHER) show a composition bias toward basic and acidic residues.

This is Endonuclease/exonuclease/phosphatase family domain-containing protein 1 (EEPD1) from Homo sapiens (Human).